Consider the following 586-residue polypeptide: A-type ATP synthase subunit A (586 aa).

Residue 232 to 239 (GPFGSGKT) coordinates ATP.

This sequence belongs to the ATPase alpha/beta chains family. Has multiple subunits with at least A(3), B(3), C, D, E, F, H, I and proteolipid K(x).

It localises to the cell membrane. The catalysed reaction is ATP + H2O + 4 H(+)(in) = ADP + phosphate + 5 H(+)(out). Its function is as follows. Component of the A-type ATP synthase that produces ATP from ADP in the presence of a proton gradient across the membrane. The A chain is the catalytic subunit. In Methanococcus maripaludis (strain C5 / ATCC BAA-1333), this protein is A-type ATP synthase subunit A.